The following is a 195-amino-acid chain: dITP/XTP pyrophosphatase (195 aa).

Substrate is bound at residue 9–14; sequence TGNKGK. E41 and D70 together coordinate Mg(2+). D70 acts as the Proton acceptor in catalysis. Substrate contacts are provided by residues S71, 155–158, K178, and 183–184; these read FGYD and HR.

This sequence belongs to the HAM1 NTPase family. As to quaternary structure, homodimer. Mg(2+) serves as cofactor.

The enzyme catalyses XTP + H2O = XMP + diphosphate + H(+). It catalyses the reaction dITP + H2O = dIMP + diphosphate + H(+). The catalysed reaction is ITP + H2O = IMP + diphosphate + H(+). Its function is as follows. Pyrophosphatase that catalyzes the hydrolysis of nucleoside triphosphates to their monophosphate derivatives, with a high preference for the non-canonical purine nucleotides XTP (xanthosine triphosphate), dITP (deoxyinosine triphosphate) and ITP. Seems to function as a house-cleaning enzyme that removes non-canonical purine nucleotides from the nucleotide pool, thus preventing their incorporation into DNA/RNA and avoiding chromosomal lesions. The sequence is that of dITP/XTP pyrophosphatase from Haemophilus influenzae (strain ATCC 51907 / DSM 11121 / KW20 / Rd).